Consider the following 566-residue polypeptide: Arginine--tRNA ligase (566 aa).

The short motif at 123-133 is the 'HIGH' region element; sequence PNVAKPFHVGH.

This sequence belongs to the class-I aminoacyl-tRNA synthetase family. Monomer.

Its subcellular location is the cytoplasm. It carries out the reaction tRNA(Arg) + L-arginine + ATP = L-arginyl-tRNA(Arg) + AMP + diphosphate. This is Arginine--tRNA ligase from Alkaliphilus metalliredigens (strain QYMF).